The sequence spans 184 residues: Photosystem I assembly protein Ycf4 (184 aa).

2 helical membrane-spanning segments follow: residues 22 to 42 (FCWACITSLGALGFFLVGIPS) and 64 to 84 (IVMCFYGIAGLFPSFYLWCTI).

It belongs to the Ycf4 family.

The protein resides in the plastid. It localises to the chloroplast thylakoid membrane. In terms of biological role, seems to be required for the assembly of the photosystem I complex. In Huperzia lucidula (Shining clubmoss), this protein is Photosystem I assembly protein Ycf4.